The primary structure comprises 562 residues: Protein wntless (562 aa).

Topologically, residues 1–13 (MSGTILENLSGRK) are cytoplasmic. The helical transmembrane segment at 14-34 (LSILVSSLMLCQVACFLMGGL) threads the bilayer. At 35–239 (YAPVPAGHQT…AIHQNGGFTQ (205 aa)) the chain is on the lumenal side. N-linked (GlcNAc...) asparagine glycosylation is found at Asn58 and Asn103. The helical transmembrane segment at 240–260 (VWLLLKTLLFPFVVGIMIWFW) threads the bilayer. Topologically, residues 261-270 (RRVHILQRSP) are cytoplasmic. The helical transmembrane segment at 271–291 (ALLEYMLLYLGGALSFLNLPL) threads the bilayer. The Lumenal portion of the chain corresponds to 292 to 311 (EYLTLSIEMPYMLLLSDVRQ). A helical membrane pass occupies residues 312 to 332 (GIFYAMLLSFWLVFAGEHMLI). The Cytoplasmic segment spans residues 333–344 (QDTPNKSTIRSR). Residues 345–365 (YWKHLSAVVVGCISLFVFDIC) form a helical membrane-spanning segment. Topologically, residues 366-390 (ERGVQLRNPFYSIWTTPLGAKVAMS) are lumenal. A helical membrane pass occupies residues 391–411 (FIVLAGVSAAIYFLFLCFMVW). Residues 412–441 (KVFKDIGDKRTSLPSMSQARRLHYEGLIYR) are Cytoplasmic-facing. A helical transmembrane segment spans residues 442-462 (FKFLMLATLLCAGLTVAGFIM). At 463 to 482 (GQMAEGHWKWNEDIEIQLTS) the chain is on the lumenal side. Residues 483–503 (AFLTGVYGMWNIYIFALIILY) traverse the membrane as a helical segment. Residues 504-562 (APSHKQWPTMRHSDETTQSNENIVASAASEEIEFSNLPSDSNPSEISSLTSFTRKVAFD) lie on the Cytoplasmic side of the membrane.

This sequence belongs to the wntless family. As to quaternary structure, interacts with wg; in the Golgi. Interacts with Vps35, a component of the retromer complex; wls stability is regulated by Vps35.

Its subcellular location is the presynaptic cell membrane. It localises to the postsynaptic cell membrane. It is found in the cell membrane. The protein localises to the endoplasmic reticulum membrane. The protein resides in the endosome membrane. Its subcellular location is the golgi apparatus membrane. A segment polarity gene required for wingless (wg)-dependent patterning processes, acting in both wg-sending cells and wg-target cells. In non-neuronal cells wls directs wg secretion. The wls traffic loop encompasses the Golgi, the cell surface, an endocytic compartment and a retrograde route leading back to the Golgi, and involves clathrin-mediated endocytosis and the retromer complex (a conserved protein complex consisting of Vps35 and Vps26). In neuronal cells (the larval motorneuron NMJ), the wg signal moves across the synapse via the release of wls-containing exosome-like vesicles. Postsynaptic wls is required for the trafficking of fz2 through the fz2-interacting protein Grip. This is Protein wntless from Drosophila virilis (Fruit fly).